We begin with the raw amino-acid sequence, 266 residues long: Protein STAY-GREEN homolog, chloroplastic (266 aa).

A chloroplast-targeting transit peptide spans M1–E50.

It belongs to the staygreen family.

The protein localises to the plastid. Its subcellular location is the chloroplast. Functionally, required to trigger chlorophyll degradation during leaf senescence and fruit ripening. The chain is Protein STAY-GREEN homolog, chloroplastic from Capsicum annuum (Capsicum pepper).